Here is a 578-residue protein sequence, read N- to C-terminus: MSGIASACLSCLSTVDRWCHITACLGPIGGRSRDGIYETTLADNEREAVSDLLGYLENRAETDFFRGEPLSALSTLVYSDNVDLQRSASLTFAEITERDVREVDRDTLEPILFLLQSSDIEVQRAASAALGNLAVNADNKVLIVALGGLAPLIRQMMSPNVEVQCNAVGCITNLATHEDNKAKIARSGALGPLIRLAKSKDMRVQRNATGALLNMTHSDDNRQQLVNAGAIPVLVQLLSSSDVDVQYYCTTALSNIAVDASNRKRLAQTESRLVQSLVHLMDSSTPKVQCQAALALRNLASDEKYQLEIVRAKGLPPLLRLLQSSYLPLILSAVACIRNISIHPLNESPIIDAGFLKPLVDLLGSTDNEEIQCHAISTLRNLAASSDRNKELVLQAGAVQKCKDLVLKVPLSVQSEMTAAIAVLALSDELKPHLLNLGVFDVLIPLTESESIEVQGNSAAALGNLSSKVGDYSIFVRDWADPNGGIHGYLKRFLASGDPTFQHIAIWTLLQLLESEDKRLISYIAKSDDVVHMVKSISDKNIESDEEDQEDGEGEVIALARRCLEFLGNGPRQTLVEA.

9 ARM repeats span residues 58–95, 96–135, 137–176, 178–217, 219–258, 262–301, 303–342, 344–384, and 428–467; these read NRAE…FAEI, TERD…NLAV, ADNK…NLAT, EDNK…NMTH, DDNR…NIAV, NRKR…NLAS, EKYQ…NISI, PLNE…NLAA, and DELK…NLSS.

The protein belongs to the beta-catenin family.

The protein resides in the vacuole membrane. Its function is as follows. Functions in both vacuole inheritance and protein targeting from the cytoplasm to vacuole. This Aspergillus oryzae (strain ATCC 42149 / RIB 40) (Yellow koji mold) protein is Vacuolar protein 8 (vac8).